We begin with the raw amino-acid sequence, 207 residues long: Outer-membrane lipoprotein LolB (207 aa).

A signal peptide spans 1-26; that stretch reads MSKLKIDTKRRFSLLIALVLIISLSS. The N-palmitoyl cysteine moiety is linked to residue Cys-27. Residue Cys-27 is the site of S-diacylglycerol cysteine attachment.

The protein belongs to the LolB family. In terms of assembly, monomer.

It localises to the cell outer membrane. Functionally, plays a critical role in the incorporation of lipoproteins in the outer membrane after they are released by the LolA protein. In Francisella tularensis subsp. tularensis (strain WY96-3418), this protein is Outer-membrane lipoprotein LolB.